Here is a 504-residue protein sequence, read N- to C-terminus: Arabinose import ATP-binding protein AraG (504 aa).

ABC transporter domains lie at 8-243 (LSFR…MVGR) and 256-499 (YGEE…MPKV). Residue 40–47 (GENGAGKS) participates in ATP binding.

Belongs to the ABC transporter superfamily. Arabinose importer (TC 3.A.1.2.2) family. As to quaternary structure, the complex is composed of two ATP-binding proteins (AraG), two transmembrane proteins (AraH) and a solute-binding protein (AraF).

The protein resides in the cell inner membrane. The catalysed reaction is L-arabinose(out) + ATP + H2O = L-arabinose(in) + ADP + phosphate + H(+). Functionally, part of the ABC transporter complex AraFGH involved in arabinose import. Responsible for energy coupling to the transport system. This chain is Arabinose import ATP-binding protein AraG, found in Escherichia coli O6:K15:H31 (strain 536 / UPEC).